The primary structure comprises 922 residues: Pyruvate dehydrogenase E1 component (922 aa).

In terms of assembly, homodimer. Part of an unusual ODH/PDH supercomplex, consisting of AceE (E1), AceF (E2), and Lpd (E3) together with OdhA (E1+E2). Mg(2+) is required as a cofactor. The cofactor is thiamine diphosphate.

It catalyses the reaction N(6)-[(R)-lipoyl]-L-lysyl-[protein] + pyruvate + H(+) = N(6)-[(R)-S(8)-acetyldihydrolipoyl]-L-lysyl-[protein] + CO2. In terms of biological role, is a specific component of the pyruvate dehydrogenase (PDH) complex, that catalyzes the overall conversion of pyruvate to acetyl-CoA and CO(2). AceE has reductase activity with pyruvate but does not react with 2-oxoglutarate. The polypeptide is Pyruvate dehydrogenase E1 component (aceE) (Corynebacterium glutamicum (strain ATCC 13032 / DSM 20300 / JCM 1318 / BCRC 11384 / CCUG 27702 / LMG 3730 / NBRC 12168 / NCIMB 10025 / NRRL B-2784 / 534)).